A 453-amino-acid chain; its full sequence is Bifunctional protein GlmU (453 aa).

The pyrophosphorylase stretch occupies residues 1-225 (MNIVILAAGT…EWETLGVNSK (225 aa)). Residues 6–9 (LAAG), lysine 20, glutamine 71, 76–77 (GT), 98–100 (YGD), glycine 135, glutamate 150, asparagine 165, and asparagine 223 contribute to the UDP-N-acetyl-alpha-D-glucosamine site. Aspartate 100 is a binding site for Mg(2+). Position 223 (asparagine 223) interacts with Mg(2+). The tract at residues 226 to 246 (AQLAELERIHQRTIADALLVD) is linker. The tract at residues 247 to 453 (GVTLADPARV…GYVRPVKKKS (207 aa)) is N-acetyltransferase. Residues arginine 329 and lysine 347 each coordinate UDP-N-acetyl-alpha-D-glucosamine. The active-site Proton acceptor is histidine 359. 2 residues coordinate UDP-N-acetyl-alpha-D-glucosamine: tyrosine 362 and asparagine 373. Acetyl-CoA is bound by residues alanine 376, 382 to 383 (NY), serine 401, and alanine 419.

It in the N-terminal section; belongs to the N-acetylglucosamine-1-phosphate uridyltransferase family. This sequence in the C-terminal section; belongs to the transferase hexapeptide repeat family. In terms of assembly, homotrimer. Mg(2+) serves as cofactor.

Its subcellular location is the cytoplasm. It carries out the reaction alpha-D-glucosamine 1-phosphate + acetyl-CoA = N-acetyl-alpha-D-glucosamine 1-phosphate + CoA + H(+). It catalyses the reaction N-acetyl-alpha-D-glucosamine 1-phosphate + UTP + H(+) = UDP-N-acetyl-alpha-D-glucosamine + diphosphate. Its pathway is nucleotide-sugar biosynthesis; UDP-N-acetyl-alpha-D-glucosamine biosynthesis; N-acetyl-alpha-D-glucosamine 1-phosphate from alpha-D-glucosamine 6-phosphate (route II): step 2/2. It functions in the pathway nucleotide-sugar biosynthesis; UDP-N-acetyl-alpha-D-glucosamine biosynthesis; UDP-N-acetyl-alpha-D-glucosamine from N-acetyl-alpha-D-glucosamine 1-phosphate: step 1/1. The protein operates within bacterial outer membrane biogenesis; LPS lipid A biosynthesis. Its function is as follows. Catalyzes the last two sequential reactions in the de novo biosynthetic pathway for UDP-N-acetylglucosamine (UDP-GlcNAc). The C-terminal domain catalyzes the transfer of acetyl group from acetyl coenzyme A to glucosamine-1-phosphate (GlcN-1-P) to produce N-acetylglucosamine-1-phosphate (GlcNAc-1-P), which is converted into UDP-GlcNAc by the transfer of uridine 5-monophosphate (from uridine 5-triphosphate), a reaction catalyzed by the N-terminal domain. This chain is Bifunctional protein GlmU, found in Burkholderia ambifaria (strain MC40-6).